A 65-amino-acid chain; its full sequence is Large ribosomal subunit protein uL29 (65 aa).

Belongs to the universal ribosomal protein uL29 family.

This is Large ribosomal subunit protein uL29 from Lactobacillus acidophilus (strain ATCC 700396 / NCK56 / N2 / NCFM).